We begin with the raw amino-acid sequence, 217 residues long: Insulin-like growth factor 2.S (217 aa).

The first 56 residues, 1 to 56 (MEQLSCKHRSSSVEAEAQLCRQTESRSTQLPRMSVMRHLFLLSITFLVYTLDSAKA), serve as a signal peptide directing secretion. Residues 57–83 (YRATETLCGGELVDTLQFVCGDRGFYF) form a b region. Intrachain disulfides connect cysteine 64-cysteine 103, cysteine 76-cysteine 116, and cysteine 102-cysteine 107. The c stretch occupies residues 84–96 (STNNGRSNRRPNR). The segment at 97-117 (GIVDVCCFKSCDLELLETYCA) is a. The segment at 118–123 (KPTKNE) is d. Positions 124–217 (RDVSTAPATA…LQQASEPSHN (94 aa)) are cleaved as a propeptide — e peptide.

This sequence belongs to the insulin family.

Its subcellular location is the secreted. In terms of biological role, the insulin-like growth factors, isolated from plasma, are structurally and functionally related to insulin but have a much higher growth-promoting activity. Promotes anterior neural development. Acts as a ligand for integrin which is required for IGF2 signaling. This chain is Insulin-like growth factor 2.S, found in Xenopus laevis (African clawed frog).